A 398-amino-acid polypeptide reads, in one-letter code: Lysophospholipid transporter LplT (398 aa).

12 helical membrane-spanning segments follow: residues 19–39 (VIVA…ATLA), 53–73 (VLQM…GQIA), 96–116 (ICLG…AAAY), 139–159 (LMEA…GVLA), 164–184 (IAAL…NLFI), 195–213 (SWQL…VVLW), 227–247 (LFWG…PVAL), 257–277 (YLNA…AKLV), 281–301 (TVSR…MFSL), 304–324 (ALLP…FFVV), 352–372 (NSTM…GVPA), and 373–393 (VATG…LWIW).

It belongs to the major facilitator superfamily. LplT (TC 2.A.1.42) family.

The protein resides in the cell inner membrane. In terms of biological role, catalyzes the facilitated diffusion of 2-acyl-glycero-3-phosphoethanolamine (2-acyl-GPE) into the cell. This Salmonella arizonae (strain ATCC BAA-731 / CDC346-86 / RSK2980) protein is Lysophospholipid transporter LplT.